Here is a 258-residue protein sequence, read N- to C-terminus: Probable pectin methylesterase CGR3 (258 aa).

The Cytoplasmic portion of the chain corresponds to 1–29 (MSRRQVRRVGDSGSFPFVGALHSKSRSSP). Residues 30-50 (LLSVCLVLVGACLLIGYAYSG) traverse the membrane as a helical segment. At 51 to 258 (PGMFKSIREV…CQVFHLKPLH (208 aa)) the chain is on the lumenal side. Residue N171 is glycosylated (N-linked (GlcNAc...) asparagine).

This sequence belongs to the class I-like SAM-binding methyltransferase superfamily.

Its subcellular location is the golgi apparatus membrane. Functionally, together with CGR2, required for homogalacturonan pectins (HG) methylesterification in the Golgi apparatus prior to integration into cell walls, essential for general growth and development. Promotes petiole elongation. Impacts photosynthesis and respiration efficiency by influencing leaf mesophyll morphology and physiology; pectin methylesterification modulates both expansion and positioning of cells in leaves, probably by changing cell walls plasticity. This Arabidopsis thaliana (Mouse-ear cress) protein is Probable pectin methylesterase CGR3.